The chain runs to 425 residues: MKLIKNGKILKNGILKDTEILIDGKRIKQISSKINASSSNIEVIDAKGNLIAPGFVDVHVHLREPGGEHKETIESGTKAAARGGFTTVCPMPNTRPVPDTVEHVRELRQRISETAQVRVLPYAAITKRQAGTELVDFEKLALEGVFAFTDDGVGVQTASMMYAAMKQAVKVKKPIVAHCEDNSLIYGGAMHKGKRSEELGIPGIPNIAESVQIARDVLLAEATGCHYHVCHVSTKESVRVIRDAKKAGIHVTAEVTPHHLLLTENDVPGDDSNYKMNPPLRSNEDREALLEGLLDGTIDCIATDHAPHAKEEKAQPMTKAPFGIVGSETAFPLLYTHFVRRGNWSLQQLVDYFTIKPATIFNLNYGKLHKDSYADLTIIDLNTEKEIKSEDFLSKADNTPFIGEKVYGNPTLTMLKGEVVFEEEK.

Zn(2+)-binding residues include His-59 and His-61. Residues 61–63 (HLR) and Asn-93 each bind substrate. Zn(2+) is bound by residues Asp-151, His-178, and His-231. Asn-277 is a binding site for substrate. Zn(2+) is bound at residue Asp-304. The active site involves Asp-304. Substrate-binding positions include His-308 and 322 to 323 (FG).

This sequence belongs to the metallo-dependent hydrolases superfamily. DHOase family. Class I DHOase subfamily. Zn(2+) is required as a cofactor.

It catalyses the reaction (S)-dihydroorotate + H2O = N-carbamoyl-L-aspartate + H(+). It participates in pyrimidine metabolism; UMP biosynthesis via de novo pathway; (S)-dihydroorotate from bicarbonate: step 3/3. In terms of biological role, catalyzes the reversible cyclization of carbamoyl aspartate to dihydroorotate. In Staphylococcus epidermidis (strain ATCC 12228 / FDA PCI 1200), this protein is Dihydroorotase.